We begin with the raw amino-acid sequence, 368 residues long: Homoserine O-acetyltransferase (368 aa).

The AB hydrolase-1 domain occupies 44–350 (NAILVAHAWT…AYGHDAFLLE (307 aa)). S150 acts as the Nucleophile in catalysis. Residue R217 participates in substrate binding. Catalysis depends on residues D311 and H344. A substrate-binding site is contributed by D345.

It belongs to the AB hydrolase superfamily. MetX family. In terms of assembly, homodimer.

The protein localises to the cytoplasm. The enzyme catalyses L-homoserine + acetyl-CoA = O-acetyl-L-homoserine + CoA. The protein operates within amino-acid biosynthesis; L-methionine biosynthesis via de novo pathway; O-acetyl-L-homoserine from L-homoserine: step 1/1. Transfers an acetyl group from acetyl-CoA to L-homoserine, forming acetyl-L-homoserine. This chain is Homoserine O-acetyltransferase, found in Geobacter sulfurreducens (strain ATCC 51573 / DSM 12127 / PCA).